Reading from the N-terminus, the 256-residue chain is Trypsin, alkaline B (256 aa).

Positions 1 to 17 (MRLFLALLALGFAAVAA) are cleaved as a signal peptide. A propeptide spans 18-24 (VPANPQR) (activation peptide). In terms of domain architecture, Peptidase S1 spans 25-256 (IVGGSTTTIQ…RFANWIRNNS (232 aa)). Cysteines 55 and 71 form a disulfide. Catalysis depends on charge relay system residues H70 and D115. 2 cysteine pairs are disulfide-bonded: C180–C197 and C209–C233. Residue S213 is the Charge relay system of the active site.

It belongs to the peptidase S1 family. In terms of tissue distribution, midgut.

Its subcellular location is the secreted. The protein resides in the extracellular space. It catalyses the reaction Preferential cleavage: Arg-|-Xaa, Lys-|-Xaa.. This Manduca sexta (Tobacco hawkmoth) protein is Trypsin, alkaline B.